Consider the following 92-residue polypeptide: Small ribosomal subunit protein uS19 (92 aa).

The protein belongs to the universal ribosomal protein uS19 family.

Protein S19 forms a complex with S13 that binds strongly to the 16S ribosomal RNA. This chain is Small ribosomal subunit protein uS19, found in Bradyrhizobium diazoefficiens (strain JCM 10833 / BCRC 13528 / IAM 13628 / NBRC 14792 / USDA 110).